The sequence spans 88 residues: Small ribosomal subunit protein uS17 (88 aa).

The protein belongs to the universal ribosomal protein uS17 family. Part of the 30S ribosomal subunit.

Its function is as follows. One of the primary rRNA binding proteins, it binds specifically to the 5'-end of 16S ribosomal RNA. In Prochlorococcus marinus (strain NATL1A), this protein is Small ribosomal subunit protein uS17.